Here is a 156-residue protein sequence, read N- to C-terminus: Succinate dehydrogenase assembly factor 2-B, mitochondrial (156 aa).

Residues 1–24 (MLRQFIVSTVGRRLQLPMMAQSRL) constitute a mitochondrion transit peptide.

It belongs to the SDHAF2 family. In terms of assembly, interacts with the flavoprotein subunit within the SDH catalytic dimer.

Its subcellular location is the mitochondrion matrix. Plays an essential role in the assembly of succinate dehydrogenase (SDH), an enzyme complex (also referred to as respiratory complex II) that is a component of both the tricarboxylic acid (TCA) cycle and the mitochondrial electron transport chain, and which couples the oxidation of succinate to fumarate with the reduction of ubiquinone (coenzyme Q) to ubiquinol. Required for flavinylation (covalent attachment of FAD) of the flavoprotein subunit of the SDH catalytic dimer. The chain is Succinate dehydrogenase assembly factor 2-B, mitochondrial from Drosophila melanogaster (Fruit fly).